Here is a 97-residue protein sequence, read N- to C-terminus: Large ribosomal subunit protein bL27 (97 aa).

The tract at residues Met1–Val23 is disordered.

This sequence belongs to the bacterial ribosomal protein bL27 family.

The chain is Large ribosomal subunit protein bL27 from Acidothermus cellulolyticus (strain ATCC 43068 / DSM 8971 / 11B).